We begin with the raw amino-acid sequence, 472 residues long: Glutamine synthetase (472 aa).

The GS beta-grasp domain maps to 17–101 (YDIKFVLLRF…LRCSIYEPST (85 aa)). In terms of domain architecture, GS catalytic spans 109–472 (PRSIAIRAEN…HPVEFEMYYA (364 aa)). Glutamate 134 and glutamate 136 together coordinate Mg(2+). Glutamate 212 contributes to the ATP binding site. Mg(2+)-binding residues include glutamate 217 and glutamate 225. Residues 269–270 (NG) and glycine 270 contribute to the L-glutamate site. Residue histidine 274 coordinates Mg(2+). ATP contacts are provided by residues 276–278 (NMS) and serine 278. L-glutamate-binding residues include arginine 326, glutamate 332, and arginine 344. Arginine 344, arginine 349, and lysine 357 together coordinate ATP. Glutamate 362 contacts Mg(2+). Arginine 364 provides a ligand contact to L-glutamate. Tyrosine 402 is modified (O-AMP-tyrosine).

It belongs to the glutamine synthetase family. Oligomer of 12 subunits arranged in the form of two hexameric ring. Requires Mg(2+) as cofactor.

Its subcellular location is the cytoplasm. The catalysed reaction is L-glutamate + NH4(+) + ATP = L-glutamine + ADP + phosphate + H(+). With respect to regulation, the activity of this enzyme could be controlled by adenylation under conditions of abundant glutamine. Functionally, catalyzes the ATP-dependent biosynthesis of glutamine from glutamate and ammonia. This is Glutamine synthetase from Pasteurella multocida (strain Pm70).